Here is a 185-residue protein sequence, read N- to C-terminus: Elongation factor P (185 aa).

It belongs to the elongation factor P family.

The protein localises to the cytoplasm. Its pathway is protein biosynthesis; polypeptide chain elongation. Its function is as follows. Involved in peptide bond synthesis. Stimulates efficient translation and peptide-bond synthesis on native or reconstituted 70S ribosomes in vitro. Probably functions indirectly by altering the affinity of the ribosome for aminoacyl-tRNA, thus increasing their reactivity as acceptors for peptidyl transferase. This is Elongation factor P from Bordetella petrii (strain ATCC BAA-461 / DSM 12804 / CCUG 43448).